Here is an 81-residue protein sequence, read N- to C-terminus: Photosystem I iron-sulfur center (81 aa).

4Fe-4S ferredoxin-type domains lie at 2–31 and 39–68; these read SHFVKIYDTCIGCTQCVRACPTDVLEMIPW and IASAPRTEDCVGCKRCESACPTDFLSVRVY. 8 residues coordinate [4Fe-4S] cluster: cysteine 11, cysteine 14, cysteine 17, cysteine 21, cysteine 48, cysteine 51, cysteine 54, and cysteine 58.

In terms of assembly, the eukaryotic PSI reaction center is composed of at least 11 subunits. It depends on [4Fe-4S] cluster as a cofactor.

Its subcellular location is the plastid thylakoid membrane. It carries out the reaction reduced [plastocyanin] + hnu + oxidized [2Fe-2S]-[ferredoxin] = oxidized [plastocyanin] + reduced [2Fe-2S]-[ferredoxin]. Apoprotein for the two 4Fe-4S centers FA and FB of photosystem I (PSI); essential for photochemical activity. FB is the terminal electron acceptor of PSI, donating electrons to ferredoxin. The C-terminus interacts with PsaA/B/D and helps assemble the protein into the PSI complex. Required for binding of PsaD and PsaE to PSI. PSI is a plastocyanin-ferredoxin oxidoreductase, converting photonic excitation into a charge separation, which transfers an electron from the donor P700 chlorophyll pair to the spectroscopically characterized acceptors A0, A1, FX, FA and FB in turn. This is Photosystem I iron-sulfur center from Cuscuta exaltata (Tall dodder).